The chain runs to 450 residues: Phosphoglucosamine mutase (450 aa).

Serine 102 serves as the catalytic Phosphoserine intermediate. 4 residues coordinate Mg(2+): serine 102, aspartate 244, aspartate 246, and aspartate 248. Serine 102 is subject to Phosphoserine.

This sequence belongs to the phosphohexose mutase family. Mg(2+) is required as a cofactor. Post-translationally, activated by phosphorylation.

The catalysed reaction is alpha-D-glucosamine 1-phosphate = D-glucosamine 6-phosphate. Its function is as follows. Catalyzes the conversion of glucosamine-6-phosphate to glucosamine-1-phosphate. The protein is Phosphoglucosamine mutase of Nitratidesulfovibrio vulgaris (strain DSM 19637 / Miyazaki F) (Desulfovibrio vulgaris).